The following is an 841-amino-acid chain: Protein translocase subunit SecA (841 aa).

ATP-binding positions include 79-80 (MF), Q85, 103-107 (GEGKT), and D492. A disordered region spans residues 786 to 813 (REEVVQGQTTAHQPQEGDDNKKAKKAPV). 4 residues coordinate Zn(2+): C825, C827, C836, and C837.

Belongs to the SecA family. Part of the essential Sec protein translocation apparatus which comprises SecA, SecYEG and auxiliary proteins SecDF. Other proteins may be involved. Monomer and many different homodimers can be isolated, some of which are not formed in the presence of a synthetic signal peptide. A single SecA monomer interacts with SecY in the channel. Only shows some colocalization with FloA or FloT membrane assemblies. It depends on Zn(2+) as a cofactor.

It is found in the cell membrane. Its subcellular location is the cytoplasm. The protein resides in the membrane raft. It catalyses the reaction ATP + H2O + cellular proteinSide 1 = ADP + phosphate + cellular proteinSide 2.. Its function is as follows. Part of the Sec protein translocase complex. Interacts with the SecYEG preprotein conducting channel. Has a central role in coupling the hydrolysis of ATP to the transfer of proteins into and across the cell membrane, serving as an ATP-driven molecular motor driving the stepwise translocation of polypeptide chains across the membrane. The polypeptide is Protein translocase subunit SecA (Bacillus subtilis (strain 168)).